Consider the following 142-residue polypeptide: Protein SprT-like (142 aa).

The 135-residue stretch at 4–138 (YVKKVSIEDF…FACGYCHGRL (135 aa)) folds into the SprT-like domain. His-62 provides a ligand contact to Zn(2+). Glu-63 is a catalytic residue. Zn(2+) is bound at residue His-66.

It belongs to the SprT family. Zn(2+) is required as a cofactor.

It is found in the cytoplasm. The polypeptide is Protein SprT-like (Streptococcus agalactiae serotype Ia (strain ATCC 27591 / A909 / CDC SS700)).